A 252-amino-acid chain; its full sequence is Tabtoxin biosynthesis enzyme (252 aa).

The interval 1–23 (MYQRTATQLARKPASKQGETEMN) is disordered.

May play a role in tabtoxin biosynthesis. The chain is Tabtoxin biosynthesis enzyme (tblA) from Pseudomonas amygdali pv. tabaci (Pseudomonas syringae pv. tabaci).